The chain runs to 434 residues: MFS-type transporter AFUA_1G00970 (434 aa).

12 consecutive transmembrane segments (helical) span residues 21–41 (VIGG…FGVF), 60–80 (WIGS…GVLV), 87–107 (VLLI…SLCS), 112–132 (IFLA…WPPF), 145–165 (LALG…SIMI), 182–202 (VLGF…TEPP), 240–260 (VFIS…NPFF), 278–298 (YMIS…GIVA), 301–321 (VGHY…SFCW), 327–347 (LTGL…ILSL), 364–384 (AIGF…PIGG), and 393–413 (LSLS…MGYA). A disordered region spans residues 201–225 (PPKQSQPQPRPALEATVEGGSASPT).

This sequence belongs to the major facilitator superfamily. Monocarboxylate porter (TC 2.A.1.13) family.

It localises to the cell membrane. Functionally, MFS-type transporter; part of the gene cluster that mediates the biosynthesis of fumigermin that inhibits germination of spores of the inducing S.rapamycinicus, and thus helps the fungus to defend resources in the shared habitat against a bacterial competitor. May be involved in the secretion of fumigermin. This is MFS-type transporter AFUA_1G00970 from Aspergillus fumigatus (strain ATCC MYA-4609 / CBS 101355 / FGSC A1100 / Af293) (Neosartorya fumigata).